The primary structure comprises 594 residues: Probable methylenetetrahydrofolate reductase (NADH) (594 aa).

Residue Glu21 is the Proton donor/acceptor of the active site. NAD(+) contacts are provided by residues 21–26 and 52–53; these read EYFPPK and TW. Residues 52-53, His81, 111-113, Tyr153, 157-160, Asp175, and Lys182 contribute to the FAD site; these read TW, RGD, and HPDA. Asp113 is a substrate binding site. Residues Gln193 and Tyr285 each coordinate substrate.

It belongs to the methylenetetrahydrofolate reductase family. In terms of assembly, homodimer. It depends on FAD as a cofactor.

The enzyme catalyses (6S)-5-methyl-5,6,7,8-tetrahydrofolate + NAD(+) = (6R)-5,10-methylene-5,6,7,8-tetrahydrofolate + NADH + H(+). Its pathway is one-carbon metabolism; tetrahydrofolate interconversion. Its activity is regulated as follows. Plant MTHFRs strongly prefer NADH over NADPH. Not inhibited by methionine or S-adenosylmethionine. In terms of biological role, the probable reversibility of the MTHFR reaction in plants suggests that they can metabolize the methyl group of 5,10-methylenetetrahydrofolate to serine, sugars and starch. The chain is Probable methylenetetrahydrofolate reductase (NADH) from Oryza sativa subsp. japonica (Rice).